The sequence spans 284 residues: Shikimate dehydrogenase (NADP(+)) (284 aa).

Residues 20-22 and serine 67 each bind shikimate; that span reads SIS. Lysine 71 (proton acceptor) is an active-site residue. Position 83 (aspartate 83) interacts with NADP(+). Shikimate-binding residues include asparagine 92 and aspartate 107. NADP(+) is bound by residues 129 to 133 and isoleucine 227; that span reads GAGGA. Tyrosine 229 provides a ligand contact to shikimate. Glycine 250 provides a ligand contact to NADP(+).

Belongs to the shikimate dehydrogenase family. In terms of assembly, homodimer.

The catalysed reaction is shikimate + NADP(+) = 3-dehydroshikimate + NADPH + H(+). The protein operates within metabolic intermediate biosynthesis; chorismate biosynthesis; chorismate from D-erythrose 4-phosphate and phosphoenolpyruvate: step 4/7. Functionally, involved in the biosynthesis of the chorismate, which leads to the biosynthesis of aromatic amino acids. Catalyzes the reversible NADPH linked reduction of 3-dehydroshikimate (DHSA) to yield shikimate (SA). This Streptococcus pneumoniae (strain 70585) protein is Shikimate dehydrogenase (NADP(+)).